The primary structure comprises 122 residues: MIQEQTMLTVADNSGARRVMCIKVLGGSCRRYASIGDVIKITIKEAIPRGKVKKGDVLKAVIVRTKKGVRRPDGSIVRFDGNACVLLNNNEQPIGTRVFGPITRELRIEKFMKIISLAPEVL.

This sequence belongs to the universal ribosomal protein uL14 family. In terms of assembly, part of the 50S ribosomal subunit. Forms a cluster with proteins L3 and L19. In the 70S ribosome, L14 and L19 interact and together make contacts with the 16S rRNA in bridges B5 and B8.

In terms of biological role, binds to 23S rRNA. Forms part of two intersubunit bridges in the 70S ribosome. The protein is Large ribosomal subunit protein uL14 of Baumannia cicadellinicola subsp. Homalodisca coagulata.